The sequence spans 105 residues: Large ribosomal subunit protein bL21 (105 aa).

It belongs to the bacterial ribosomal protein bL21 family. As to quaternary structure, part of the 50S ribosomal subunit. Contacts protein L20.

In terms of biological role, this protein binds to 23S rRNA in the presence of protein L20. In Methylobacterium sp. (strain 4-46), this protein is Large ribosomal subunit protein bL21.